Reading from the N-terminus, the 362-residue chain is 5-amino-6-(D-ribitylamino)uracil--L-tyrosine 4-hydroxyphenyl transferase (362 aa).

The Radical SAM core domain maps to 48 to 294; the sequence is ITYVVNRNIN…GDTIKNIQVS (247 aa). [4Fe-4S] cluster contacts are provided by Cys-62, Cys-66, and Cys-69.

This sequence belongs to the radical SAM superfamily. CofH family. In terms of assembly, consists of two subunits, CofG and CofH. [4Fe-4S] cluster is required as a cofactor.

The enzyme catalyses 5-amino-6-(D-ribitylamino)uracil + L-tyrosine + S-adenosyl-L-methionine = 5-amino-5-(4-hydroxybenzyl)-6-(D-ribitylimino)-5,6-dihydrouracil + 2-iminoacetate + 5'-deoxyadenosine + L-methionine + H(+). It functions in the pathway cofactor biosynthesis; coenzyme F0 biosynthesis. In terms of biological role, catalyzes the radical-mediated synthesis of 5-amino-5-(4-hydroxybenzyl)-6-(D-ribitylimino)-5,6-dihydrouracil from 5-amino-6-(D-ribitylamino)uracil and L-tyrosine. The protein is 5-amino-6-(D-ribitylamino)uracil--L-tyrosine 4-hydroxyphenyl transferase of Methanococcus aeolicus (strain ATCC BAA-1280 / DSM 17508 / OCM 812 / Nankai-3).